A 150-amino-acid polypeptide reads, in one-letter code: Retinal rod rhodopsin-sensitive cGMP 3',5'-cyclic phosphodiesterase subunit delta (150 aa).

A required for association with membranes region spans residues Arg-144–Val-150.

It belongs to the PDE6D/unc-119 family. As to quaternary structure, interacts with the prenylated catalytic subunits of PDE6, an oligomer composed of two catalytic chains (PDE6A and PDE6B) and two inhibitory chains (gamma); has no effect on enzyme activity but promotes the release of the prenylated enzyme from cell membrane. Interacts with prenylated GRK1 and GRK7. Interacts with prenylated Ras family members, including RAP2A and RAP2C. Interacts with prenylated RHEB and NRAS. Interacts with prenylated HRAS and KRAS. Interacts with RAB13 (prenylated form); dissociates RAB13 from membranes. Interacts with prenylated INPP5E. Interacts with RAB28 (prenylated form); the interaction promotes RAB28 delivery to the photoreceptor outer segments. Interacts with RPGR. Interacts with ARL2. Interacts with ARL3; the interaction occurs specifically with the GTP-bound form of ARL3. Interaction with ARL2 and ARL3 promotes release of farnesylated cargo proteins. As to expression, widely expressed. Detected in various tissues including spleen, prostate gland, testis, ovary, small intestine, colon, retina, and peripheral blood.

Its subcellular location is the cytoplasm. The protein localises to the cytosol. It localises to the cytoplasmic vesicle membrane. The protein resides in the cytoskeleton. It is found in the cilium basal body. Promotes the release of prenylated target proteins from cellular membranes. Modulates the activity of prenylated or palmitoylated Ras family members by regulating their subcellular location. Required for normal ciliary targeting of farnesylated target proteins, such as INPP5E. Required for RAB28 localization to the cone cell outer segments in the retina. Modulates the subcellular location of target proteins by acting as a GTP specific dissociation inhibitor (GDI). Increases the affinity of ARL3 for GTP by several orders of magnitude. Stabilizes ARL3-GTP by decreasing the nucleotide dissociation rate. In Homo sapiens (Human), this protein is Retinal rod rhodopsin-sensitive cGMP 3',5'-cyclic phosphodiesterase subunit delta (PDE6D).